Reading from the N-terminus, the 445-residue chain is tRNA-2-methylthio-N(6)-dimethylallyladenosine synthase (445 aa).

Positions 3–124 (KKLYIKTYGC…LPELISKVVR (122 aa)) constitute an MTTase N-terminal domain. Cys-12, Cys-48, Cys-87, Cys-162, Cys-166, and Cys-169 together coordinate [4Fe-4S] cluster. Residues 148–380 (YPQGASSFIS…QQELTAQQLA (233 aa)) enclose the Radical SAM core domain. Residues 383-445 (ESCVGSIMKV…ASNSLTGEVI (63 aa)) form the TRAM domain.

It belongs to the methylthiotransferase family. MiaB subfamily. As to quaternary structure, monomer. The cofactor is [4Fe-4S] cluster.

It is found in the cytoplasm. The catalysed reaction is N(6)-dimethylallyladenosine(37) in tRNA + (sulfur carrier)-SH + AH2 + 2 S-adenosyl-L-methionine = 2-methylsulfanyl-N(6)-dimethylallyladenosine(37) in tRNA + (sulfur carrier)-H + 5'-deoxyadenosine + L-methionine + A + S-adenosyl-L-homocysteine + 2 H(+). Its function is as follows. Catalyzes the methylthiolation of N6-(dimethylallyl)adenosine (i(6)A), leading to the formation of 2-methylthio-N6-(dimethylallyl)adenosine (ms(2)i(6)A) at position 37 in tRNAs that read codons beginning with uridine. This Rickettsia felis (strain ATCC VR-1525 / URRWXCal2) (Rickettsia azadi) protein is tRNA-2-methylthio-N(6)-dimethylallyladenosine synthase.